The chain runs to 364 residues: Alanine racemase (364 aa).

Residue Lys-34 is the Proton acceptor; specific for D-alanine of the active site. Lys-34 is subject to N6-(pyridoxal phosphate)lysine. Position 129 (Arg-129) interacts with substrate. Catalysis depends on Tyr-259, which acts as the Proton acceptor; specific for L-alanine. Position 307 (Met-307) interacts with substrate.

This sequence belongs to the alanine racemase family. Pyridoxal 5'-phosphate serves as cofactor.

The enzyme catalyses L-alanine = D-alanine. The protein operates within amino-acid biosynthesis; D-alanine biosynthesis; D-alanine from L-alanine: step 1/1. In terms of biological role, catalyzes the interconversion of L-alanine and D-alanine. May also act on other amino acids. This is Alanine racemase (alr) from Coxiella burnetii (strain RSA 493 / Nine Mile phase I).